Here is a 444-residue protein sequence, read N- to C-terminus: Probable D-serine dehydratase (444 aa).

N6-(pyridoxal phosphate)lysine is present on lysine 118.

The protein belongs to the serine/threonine dehydratase family. DsdA subfamily. Requires pyridoxal 5'-phosphate as cofactor.

It catalyses the reaction D-serine = pyruvate + NH4(+). This is Probable D-serine dehydratase from Desulfitobacterium hafniense (strain Y51).